Reading from the N-terminus, the 139-residue chain is Ribosomal RNA large subunit methyltransferase H (139 aa).

Residues L57, G88, and 107 to 112 (LSAMTF) contribute to the S-adenosyl-L-methionine site.

Belongs to the RNA methyltransferase RlmH family. In terms of assembly, homodimer.

It localises to the cytoplasm. The catalysed reaction is pseudouridine(1915) in 23S rRNA + S-adenosyl-L-methionine = N(3)-methylpseudouridine(1915) in 23S rRNA + S-adenosyl-L-homocysteine + H(+). Its function is as follows. Specifically methylates the pseudouridine at position 1915 (m3Psi1915) in 23S rRNA. This chain is Ribosomal RNA large subunit methyltransferase H, found in Solibacter usitatus (strain Ellin6076).